The primary structure comprises 208 residues: Large ribosomal subunit protein bL9 (208 aa).

A disordered region spans residues 168 to 208 (GKVEKGSCTEGESLELGSVDNDINSGNVDSNESEKQDSVSE). Polar residues predominate over residues 188–197 (NDINSGNVDS). The segment covering 199–208 (ESEKQDSVSE) has biased composition (basic and acidic residues).

It belongs to the bacterial ribosomal protein bL9 family.

Functionally, binds to the 23S rRNA. The protein is Large ribosomal subunit protein bL9 of Ehrlichia chaffeensis (strain ATCC CRL-10679 / Arkansas).